The primary structure comprises 1523 residues: Lysophospholipase nte1 (1523 aa).

Topologically, residues 1–66 (MADGVTLVDS…LPPVPTTMAG (66 aa)) are cytoplasmic. The helical transmembrane segment at 67–87 (WIGWVFSFFFQVIPSVLYWVI) threads the bilayer. Topologically, residues 88–109 (TFSTITLPTWLFTLFSMSLTFT) are lumenal. The helical transmembrane segment at 110-130 (MNFTTLLLIVLAMVSTISWFI) threads the bilayer. The Cytoplasmic segment spans residues 131–1523 (RYRFLNMYSR…RTMAPRRASI (1393 aa)). Disordered regions lie at residues 309 to 384 (VPNS…KSVH) and 524 to 545 (RAAT…GVSP). Over residues 370 to 382 (ESRKHSSRKRRKS) the composition is skewed to basic residues. A nucleoside 3',5'-cyclic phosphate contacts are provided by residues 681–800 (GGTS…GAVA) and 841–961 (RLTS…IAQR). The region spanning 1220–1384 (LVLGGGGARG…IDNLTVDHMK (165 aa)) is the PNPLA domain. The short motif at 1224–1229 (GGGARG) is the GXGXXG element. The GXSXG motif lies at 1251-1255 (GTSIG). Catalysis depends on Ser-1253, which acts as the Nucleophile. The active-site Proton acceptor is the Asp-1371. The short motif at 1371–1373 (DGG) is the DGA/G element. A disordered region spans residues 1502 to 1523 (LPEETEEKKKLQRTMAPRRASI).

The protein belongs to the NTE family.

Its subcellular location is the endoplasmic reticulum membrane. It carries out the reaction a 1-acyl-sn-glycero-3-phosphocholine + H2O = sn-glycerol 3-phosphocholine + a fatty acid + H(+). Its activity is regulated as follows. Inhibited by organophosphorus esters. Its function is as follows. Intracellular phospholipase B that catalyzes the double deacylation of phosphatidylcholine (PC) to glycerophosphocholine (GroPCho). Plays an important role in membrane lipid homeostasis. Responsible for the rapid PC turnover in response to inositol, elevated temperatures, or when choline is present in the growth medium. The polypeptide is Lysophospholipase nte1 (nte1) (Neosartorya fischeri (strain ATCC 1020 / DSM 3700 / CBS 544.65 / FGSC A1164 / JCM 1740 / NRRL 181 / WB 181) (Aspergillus fischerianus)).